The chain runs to 428 residues: GTPase Obg (428 aa).

The 158-residue stretch at 1–158 (MFVDQVKVYV…RDVILELKVL (158 aa)) folds into the Obg domain. The tract at residues 118–145 (KGGRGGRGNSRFATPANPAPQLSENGEP) is disordered. One can recognise an OBG-type G domain in the interval 159–329 (ADVGLVGFPS…LLFEIANQLE (171 aa)). GTP is bound by residues 165 to 172 (GFPSVGKS), 190 to 194 (FTTLV), 212 to 215 (DLPG), 282 to 285 (NKMD), and 310 to 312 (SAI). Ser172 and Thr192 together coordinate Mg(2+). Residues 350–428 (RFDEGDAPFE…LLEFEFEFID (79 aa)) form the OCT domain.

It belongs to the TRAFAC class OBG-HflX-like GTPase superfamily. OBG GTPase family. As to quaternary structure, monomer. Mg(2+) serves as cofactor.

It localises to the cytoplasm. Functionally, an essential GTPase which binds GTP, GDP and possibly (p)ppGpp with moderate affinity, with high nucleotide exchange rates and a fairly low GTP hydrolysis rate. Plays a role in control of the cell cycle, stress response, ribosome biogenesis and in those bacteria that undergo differentiation, in morphogenesis control. The chain is GTPase Obg from Bacillus pumilus (strain SAFR-032).